The following is a 633-amino-acid chain: ATP-dependent clpX-like chaperone, mitochondrial (633 aa).

A mitochondrion-targeting transit peptide spans 1–56 (MPSCGACTCGAAAVRLITSSLASAQRGISGGRIHMSVLGRLGTFETQILQRAPLRS). Residues 68 to 100 (DGISKDGSGDGNKKSASEGSSKKSGSGNSGKGG) are disordered. Basic and acidic residues predominate over residues 69-83 (GISKDGSGDGNKKSA). The segment covering 84-93 (SEGSSKKSGS) has biased composition (low complexity). The region spanning 93-146 (SGNSGKGGNQLRCPKCGDLCTHVETFVSSTRFVKCEKCHHFFVVLSEADSKKSI) is the ClpX-type ZB domain. Cys-105, Cys-108, Cys-127, and Cys-130 together coordinate Zn(2+). 294–301 (PTGSGKTL) contacts ATP. Lys-437 carries the post-translational modification N6-acetyllysine. The span at 598–610 (KEPGYIRAPTKES) shows a compositional bias: basic and acidic residues. The disordered stretch occupies residues 598-633 (KEPGYIRAPTKESSEEEYDSGVEEEGWPRQADAANS). Over residues 611 to 622 (SEEEYDSGVEEE) the composition is skewed to acidic residues. Ser-617 is subject to Phosphoserine.

Belongs to the ClpX chaperone family. As to quaternary structure, homohexamer that forms a ring structure; this hexamerization requires ATP binding. Component of the ClpXP complex formed by the assembly of two CLPP heptameric rings with two CLPX hexameric rings, giving rise to a symmetrical structure with two central CLPP rings flanked by a CLPX ring at either end of the complex. Interacts with TFAM. In terms of tissue distribution, higher expression in skeletal muscle and heart and to a lesser extent in liver, brain, placenta, lung, kidney and pancreas.

The protein resides in the mitochondrion. It localises to the mitochondrion matrix. It is found in the mitochondrion nucleoid. The catalysed reaction is ATP + H2O = ADP + phosphate + H(+). Functionally, ATP-dependent chaperone that functions as an unfoldase. As part of the ClpXP protease complex, it recognizes specific protein substrates, unfolds them using energy derived from ATP hydrolysis, and then translocates them to the proteolytic subunit (CLPP) of the ClpXP complex for degradation. Thanks to its chaperone activity, it also functions in the incorporation of the pyridoxal phosphate cofactor into 5-aminolevulinate synthase, thereby activating 5-aminolevulinate (ALA) synthesis, the first step in heme biosynthesis. This chaperone is also involved in the control of mtDNA nucleoid distribution, by regulating mitochondrial transcription factor A (TFAM) activity. This is ATP-dependent clpX-like chaperone, mitochondrial from Homo sapiens (Human).